Consider the following 285-residue polypeptide: Transcription factor JAMYB (285 aa).

HTH myb-type domains follow at residues 26–78 and 79–133; these read SAEL…LNYL and RPDV…QKHA. DNA-binding regions (H-T-H motif) lie at residues 54–78 and 106–129; these read WNAL…LNYL and WSKI…RTRV.

It localises to the nucleus. Probable transcription factor that may be involved in the jasmonate-dependent defense responses to the rice blast fungus Magnaporthe oryzae. Does not seem to function in the salicylic acid-dependent signaling pathway. The chain is Transcription factor JAMYB from Oryza sativa subsp. japonica (Rice).